Reading from the N-terminus, the 250-residue chain is Transcriptional activator protein EchR (250 aa).

An HTH luxR-type domain is found at 173 to 238 (KSQEPNIFSQ…HAIRLGVEMN (66 aa)). A DNA-binding region (H-T-H motif) is located at residues 197–216 (YQEIALILGITTSTVKFHIG).

Belongs to the autoinducer-regulated transcriptional regulatory protein family.

In terms of biological role, functions as a potential ohlL-responsive transcriptional regulator. The chain is Transcriptional activator protein EchR (echR) from Dickeya chrysanthemi (Pectobacterium chrysanthemi).